A 144-amino-acid polypeptide reads, in one-letter code: Large ribosomal subunit protein uL11 (144 aa).

Belongs to the universal ribosomal protein uL11 family. Part of the ribosomal stalk of the 50S ribosomal subunit. Interacts with L10 and the large rRNA to form the base of the stalk. L10 forms an elongated spine to which L12 dimers bind in a sequential fashion forming a multimeric L10(L12)X complex. Post-translationally, one or more lysine residues are methylated.

Functionally, forms part of the ribosomal stalk which helps the ribosome interact with GTP-bound translation factors. The polypeptide is Large ribosomal subunit protein uL11 (Neisseria meningitidis serogroup B (strain ATCC BAA-335 / MC58)).